A 102-amino-acid chain; its full sequence is UPF0751 protein Dhaf_1351 (102 aa).

It belongs to the UPF0751 family.

This chain is UPF0751 protein Dhaf_1351, found in Desulfitobacterium hafniense (strain DSM 10664 / DCB-2).